Here is a 690-residue protein sequence, read N- to C-terminus: Polyribonucleotide nucleotidyltransferase (690 aa).

Asp-483 and Asp-489 together coordinate Mg(2+). Residues 550 to 609 (PKMEQITVDKKDIAAVIGKGGATIREIVEKSGAKLDVNDEGVVTVAAPDEESRNIAMQMI) enclose the KH domain. Residues 619-686 (NKIYSGKVMK…DRGKVKLSMK (68 aa)) form the S1 motif domain.

It belongs to the polyribonucleotide nucleotidyltransferase family. It depends on Mg(2+) as a cofactor.

It is found in the cytoplasm. It carries out the reaction RNA(n+1) + phosphate = RNA(n) + a ribonucleoside 5'-diphosphate. Its function is as follows. Involved in mRNA degradation. Catalyzes the phosphorolysis of single-stranded polyribonucleotides processively in the 3'- to 5'-direction. The chain is Polyribonucleotide nucleotidyltransferase from Pelagibacter ubique (strain HTCC1062).